The following is a 206-amino-acid chain: MPKLLYLSVSPRAENSYSRQAGARMIAWLERRHGPLTVIDRDLAADPVPHIDGAMARASLMPAADRGPAEHAALALSETLIGELEAADIVLISTPMHNFTVPSALKAWIDHVVRSNRTFRSTPAGKVGLLADRPVLAVVSCGGPFHDGPGSQRDMMTPYLQYVFGSVGITQVEVVRMENMARGEDFVARGFERLNAWTGSLAIRAA.

FMN is bound by residues Ser10, Ser16–Ser18, and Ser140–Gly143.

The protein belongs to the azoreductase type 1 family. In terms of assembly, homodimer. FMN is required as a cofactor.

It catalyses the reaction 2 a quinone + NADH + H(+) = 2 a 1,4-benzosemiquinone + NAD(+). It carries out the reaction N,N-dimethyl-1,4-phenylenediamine + anthranilate + 2 NAD(+) = 2-(4-dimethylaminophenyl)diazenylbenzoate + 2 NADH + 2 H(+). In terms of biological role, quinone reductase that provides resistance to thiol-specific stress caused by electrophilic quinones. Its function is as follows. Also exhibits azoreductase activity. Catalyzes the reductive cleavage of the azo bond in aromatic azo compounds to the corresponding amines. The chain is FMN-dependent NADH:quinone oxidoreductase 2 from Cupriavidus pinatubonensis (strain JMP 134 / LMG 1197) (Cupriavidus necator (strain JMP 134)).